Consider the following 205-residue polypeptide: Proteasome subunit beta type-3 (205 aa).

The residue at position 2 (serine 2) is an N-acetylserine. Lysine 77 carries the N6-acetyllysine modification.

The protein belongs to the peptidase T1B family. In terms of assembly, the 26S proteasome consists of a 20S proteasome core and two 19S regulatory subunits. The 20S proteasome core is a barrel-shaped complex made of 28 subunits that are arranged in four stacked rings. The two outer rings are each formed by seven alpha subunits, and the two inner rings are formed by seven beta subunits. The proteolytic activity is exerted by three beta-subunits PSMB5, PSMB6 and PSMB7. In terms of tissue distribution, detected in liver (at protein level).

Its subcellular location is the cytoplasm. It is found in the nucleus. Functionally, non-catalytic component of the 20S core proteasome complex involved in the proteolytic degradation of most intracellular proteins. This complex plays numerous essential roles within the cell by associating with different regulatory particles. Associated with two 19S regulatory particles, forms the 26S proteasome and thus participates in the ATP-dependent degradation of ubiquitinated proteins. The 26S proteasome plays a key role in the maintenance of protein homeostasis by removing misfolded or damaged proteins that could impair cellular functions, and by removing proteins whose functions are no longer required. Associated with the PA200 or PA28, the 20S proteasome mediates ubiquitin-independent protein degradation. This type of proteolysis is required in several pathways including spermatogenesis (20S-PA200 complex) or generation of a subset of MHC class I-presented antigenic peptides (20S-PA28 complex). This is Proteasome subunit beta type-3 (Psmb3) from Mus musculus (Mouse).